A 631-amino-acid chain; its full sequence is 1-deoxy-D-xylulose-5-phosphate synthase (631 aa).

Thiamine diphosphate contacts are provided by residues H73, 113 to 115 (SHA), N174, Y285, and E367. N174 contacts Mg(2+).

This sequence belongs to the transketolase family. DXPS subfamily. As to quaternary structure, homodimer. Mg(2+) is required as a cofactor. Thiamine diphosphate serves as cofactor.

It catalyses the reaction D-glyceraldehyde 3-phosphate + pyruvate + H(+) = 1-deoxy-D-xylulose 5-phosphate + CO2. The protein operates within metabolic intermediate biosynthesis; 1-deoxy-D-xylulose 5-phosphate biosynthesis; 1-deoxy-D-xylulose 5-phosphate from D-glyceraldehyde 3-phosphate and pyruvate: step 1/1. Catalyzes the acyloin condensation reaction between C atoms 2 and 3 of pyruvate and glyceraldehyde 3-phosphate to yield 1-deoxy-D-xylulose-5-phosphate (DXP). The polypeptide is 1-deoxy-D-xylulose-5-phosphate synthase (Streptomyces sp. (strain CL190)).